Reading from the N-terminus, the 483-residue chain is Islet cell autoantigen 1 (483 aa).

The 204-residue stretch at 51–254 folds into the AH domain; that stretch reads ASDADLDAKL…TSHTMAAIHE (204 aa). A disordered region spans residues 281–321; that stretch reads EEKKKINQQESTDAAVQEPSQLISLEEENQRKESSSFKTED. Over residues 288–303 the composition is skewed to polar residues; it reads QQESTDAAVQEPSQLI. A compositionally biased stretch (basic and acidic residues) spans 308–321; sequence ENQRKESSSFKTED.

Expressed abundantly in pancreas, heart and brain with low levels of expression in lung, kidney, liver and thyroid.

The protein resides in the cytoplasm. It localises to the cytosol. Its subcellular location is the golgi apparatus membrane. The protein localises to the cytoplasmic vesicle. It is found in the secretory vesicle membrane. The protein resides in the secretory vesicle. It localises to the synaptic vesicle membrane. In terms of biological role, may play a role in neurotransmitter secretion. The chain is Islet cell autoantigen 1 (ICA1) from Homo sapiens (Human).